The primary structure comprises 90 residues: Small ribosomal subunit protein bS20 (90 aa).

A disordered region spans residues 1-25 (MANSAQARKRARQAAKANSHNSALR).

This sequence belongs to the bacterial ribosomal protein bS20 family.

Functionally, binds directly to 16S ribosomal RNA. The sequence is that of Small ribosomal subunit protein bS20 from Burkholderia orbicola (strain MC0-3).